The following is a 61-amino-acid chain: Sec-independent protein translocase protein TatA (61 aa).

Residues 1 to 21 (MFSNIGFPGLILILVAVLILF) form a helical membrane-spanning segment.

The protein belongs to the TatA/E family. As to quaternary structure, forms a complex with TatC.

The protein resides in the cell membrane. Functionally, part of the twin-arginine translocation (Tat) system that transports large folded proteins containing a characteristic twin-arginine motif in their signal peptide across membranes. TatA could form the protein-conducting channel of the Tat system. The protein is Sec-independent protein translocase protein TatA of Bacillus anthracis (strain A0248).